The sequence spans 101 residues: MFNLSTYYNHTRNTQKQLLEYFERRPIWMYNPFFALFLRYVIDSFKVLSRQSKYFPVRFDSIGIHRFWQDNITSLDVPANNNVSGLNVIFLRNFKDNRFLQ.

This is an uncharacterized protein from Saccharomyces cerevisiae (strain ATCC 204508 / S288c) (Baker's yeast).